A 217-amino-acid polypeptide reads, in one-letter code: MRLRHKPYAMDRINEYSHIVIGNPEERAGNWKEVFGNEQPIHIEVGTGRGRFMYDMAKANPHINYIGIEKFTSVVVDALDKLIEEELPNLKLINKDAEDLTVFFAKGEIDRVYLNFSDPWPKKRHTKRRLTYKTFLRNYEEVLVEGGEIHFKTDNQGLFEYSLMSMAEYGMLLTYLSLDLHNSDFEGNIMTEYEEKFSSKGHRIYRVEAKYRTEPMQ.

Glutamate 44, glutamate 69, aspartate 96, and aspartate 118 together coordinate S-adenosyl-L-methionine. Aspartate 118 is an active-site residue. Substrate is bound by residues lysine 122, aspartate 154, and 191–194 (TEYE).

It belongs to the class I-like SAM-binding methyltransferase superfamily. TrmB family.

It carries out the reaction guanosine(46) in tRNA + S-adenosyl-L-methionine = N(7)-methylguanosine(46) in tRNA + S-adenosyl-L-homocysteine. It functions in the pathway tRNA modification; N(7)-methylguanine-tRNA biosynthesis. Functionally, catalyzes the formation of N(7)-methylguanine at position 46 (m7G46) in tRNA. The polypeptide is tRNA (guanine-N(7)-)-methyltransferase (Bacillus anthracis (strain CDC 684 / NRRL 3495)).